The chain runs to 542 residues: Sodium/hydrogen exchanger 8 (542 aa).

Transmembrane regions (helical) follow at residues 55–75 (EQSS…CIIL), 79–99 (LIRY…LGIL), 118–138 (EEMF…IFES), 151–171 (IGSI…VVGG), 186–206 (NMTD…VATI), 256–276 (TFLQ…ALGT), 306–326 (AYLP…VFAF), 349–369 (LVLF…NFFR), 374–394 (TPKM…PYAL), 412–432 (TTIV…MPLI), and 446–466 (NKKD…ESEH). T471 bears the Phosphothreonine mark. 2 positions are modified to phosphoserine: S532 and S534.

Belongs to the monovalent cation:proton antiporter 1 (CPA1) transporter (TC 2.A.36) family.

The protein localises to the golgi apparatus membrane. Its subcellular location is the golgi apparatus. The protein resides in the trans-Golgi network membrane. It is found in the endosome. It localises to the multivesicular body membrane. The protein localises to the apical cell membrane. Its subcellular location is the cytoplasmic vesicle. The protein resides in the secretory vesicle. It is found in the acrosome. It carries out the reaction Na(+)(in) + H(+)(out) = Na(+)(out) + H(+)(in). Na(+)/H(+) antiporter. Mediates the electoneutral exchange of intracellular H(+) ions for extracellular Na(+) in 1:1 stoichiometry. Acts as an Na(+)/H(+) exchanger in the trans-Golgi. Contributes to the regulation of pH regulation of Golgi apparatus, and consequently, in protein trafficking and endosomal morphology. In germ cells, plays a crucial role in acrosome biogenesis and sperm development, probably by playing a role in the fusion of the Golgi-derived vesicles that form the acrosomal cap. Can also be active at the cell surface of specialized cells. In the small intestine, at the cell membrane, plays a major physiological role in transepithelial absorption of Na(+) and regulates intracellular pH homeostasis of intestinal epithelial cells. Acts as an important regulator of mucosal integrity in the intestine and in the stomach, could mediate the pH fluctuation necessary for mucin exocytosis or assist membrane trafficking of other proteins. Plays a role in photoreceptor survival and in the maintenance of intracellular pH homeostasis in retinal pigment epithelium (RPE cells). The chain is Sodium/hydrogen exchanger 8 (SLC9A8) from Macaca fascicularis (Crab-eating macaque).